The primary structure comprises 372 residues: Ligninase C (372 aa).

The first 26 residues, 1-26, serve as a signal peptide directing secretion; it reads MAFKSLLSFVSVIGALQGANAALTRR. The active-site Proton acceptor is His-74. The Ca(2+) site is built by Asp-75, Gly-93, Asp-95, and Ser-97. N-linked (GlcNAc...) asparagine glycosylation occurs at Asn-129. Residue His-205 coordinates heme b. 5 residues coordinate Ca(2+): Thr-206, Asp-223, Thr-225, Leu-228, and Asp-230. The interval 346 to 372 is disordered; that stretch reads TPFPTFPTDPGPKTAVAPVPKPPAARK.

Belongs to the peroxidase family. Ligninase subfamily. Ca(2+) serves as cofactor. Requires heme b as cofactor.

The catalysed reaction is 1-(3,4-dimethoxyphenyl)-2-(2-methoxyphenoxy)propane-1,3-diol + H2O2 = 3,4-dimethoxybenzaldehyde + guaiacol + glycolaldehyde + H2O. It catalyses the reaction 2 (3,4-dimethoxyphenyl)methanol + H2O2 = 2 (3,4-dimethoxyphenyl)methanol radical + 2 H2O. It participates in secondary metabolite metabolism; lignin degradation. Depolymerization of lignin. Catalyzes the C(alpha)-C(beta) cleavage of the propyl side chains of lignin. The polypeptide is Ligninase C (Trametes versicolor (White-rot fungus)).